The primary structure comprises 611 residues: MAAVRGLRVSVKAGGGAEPEPMEVEEGEVEAAADRASPREVVSGSNRRYENRAGTFITGIDVTSKEAIEKKEQRAKRFHFRAEVSDQQRNVVLDREMIRKAIPKVRLETLYVYGVDDMSTEDIFAFFKQYPPGYIEWLDDSSCNVVWLDEVTPSRALLNLSSMPTNEKGQRKKDGEHSSARSKKDRLDDSPLSSGDETEEGEVEEDNPSEAEDEDETETEKKSVNPPDTLSEAEQASLLKNELRPSSKPVKGNSLYMRFATKDDKKELGAARRSQYYMKYGNPNYGGMKGILSNSWKRRYHSRRLQRDVIKKSTFIGDDVEITPTYKHLHSGLVNVPEEPIEEEEEEEEEEEDMDEDDRVVVEYRDELQAFKREREGARRSAASNSDSDEMDYDLELKMISTPSPKKSMKMTMYADEVESQLKTIRNSMRSDSVGNSVKSRIGSKSHAEKPADVRLILEEKRQSTASRQQSSSGKSDVRQRLGKRPHSPEIRKTLSIAPTSRREPLSDVHSRLGLPKQLEGKGLYSDSKEKKTGSLWNRLGTAPKDKERPSEKSEKSPAAPEEEDSVLQQAWGALIKEKEQIRQKKSRLDNLPSLQIEISRESSSGSDTDS.

Residues Met1–Gly44 are disordered. Residues Glu20–Ala31 show a composition bias toward acidic residues. Residues Glu108–Gly169 form an RNA recognition motif (RRM) domain region. The WLDD motif; essential for 7-methylguanosine-containing mRNA cap binding motif lies at Trp137–Asp140. 5 disordered regions span residues Asn159–Leu230, Glu338–Val360, Arg373–Tyr393, Lys423–Leu568, and Arg583–Ser611. Positions Lys168–Ser179 are enriched in basic and acidic residues. 2 stretches are compositionally biased toward acidic residues: residues Asp196–Glu218 and Glu339–Asp358. A compositionally biased stretch (polar residues) spans Lys423–Lys439. The segment covering Ser446 to Gln463 has biased composition (basic and acidic residues). Over residues Ser464–Lys475 the composition is skewed to low complexity. Basic and acidic residues-rich tracts occupy residues Ser501–Ser511 and Pro544–Lys556. Over residues Glu602–Ser611 the composition is skewed to low complexity.

It belongs to the NCBP3 family. As to quaternary structure, component of an alternative cap-binding complex (CBC) composed of NCBP1/CBP80 and NCBP3.

Its subcellular location is the nucleus. The protein localises to the cytoplasm. Functionally, associates with NCBP1/CBP80 to form an alternative cap-binding complex (CBC) which plays a key role in mRNA export. NCBP3 serves as adapter protein linking the capped RNAs (m7GpppG-capped RNA) to NCBP1/CBP80. Unlike the conventional CBC with NCBP2 which binds both small nuclear RNA (snRNA) and messenger (mRNA) and is involved in their export from the nucleus, the alternative CBC with NCBP3 does not bind snRNA and associates only with mRNA thereby playing a role in only mRNA export. The chain is Nuclear cap-binding protein subunit 3 from Xenopus tropicalis (Western clawed frog).